The primary structure comprises 156 residues: Histone acetyltransferase HPA2 (156 aa).

The N-acetyltransferase domain occupies Ile9 to Tyr156. Leu93 to Gly106 is an acetyl-CoA binding site.

It belongs to the acetyltransferase family. GNAT subfamily. In terms of assembly, forms homodimers in the absence, and homotetramers in the presence of acetyl-CoA. Post-translationally, autoacetylates in an intermolecular reaction.

It carries out the reaction L-lysyl-[protein] + acetyl-CoA = N(6)-acetyl-L-lysyl-[protein] + CoA + H(+). Its function is as follows. N-acetyltransferase that acetylates histone H3 at 'Lys-14' and histone H4 at 'Lys-5' and 'Lys-12'. Also acetylates polyamines like putrescine, spermidine and spermine, and certain other small basic proteins like nuclear HMG proteins. The sequence is that of Histone acetyltransferase HPA2 from Saccharomyces cerevisiae (strain ATCC 204508 / S288c) (Baker's yeast).